An 881-amino-acid chain; its full sequence is Probable alpha/beta-glucosidase agdC (881 aa).

An N-terminal signal peptide occupies residues 1 to 14 (MLRSLLLLAPLVGA). N-linked (GlcNAc...) asparagine glycosylation is found at asparagine 171, asparagine 293, and asparagine 373. Aspartate 422 (nucleophile) is an active-site residue. Glutamate 425 is a catalytic residue. The segment at 440–485 (YARDNDLPPAAPPVRPSNPRPLPGFPGDFQPSSSSKRSTKGSKVGL) is disordered. Positions 448–463 (PAAPPVRPSNPRPLPG) are enriched in pro residues. N-linked (GlcNAc...) asparagine glycosylation is present at asparagine 506. Catalysis depends on aspartate 571, which acts as the Proton donor. N-linked (GlcNAc...) asparagine glycans are attached at residues asparagine 572, asparagine 608, and asparagine 742.

The protein belongs to the glycosyl hydrolase 31 family.

Its subcellular location is the secreted. The catalysed reaction is Hydrolysis of terminal, non-reducing (1-&gt;4)-linked alpha-D-glucose residues with release of alpha-D-glucose.. It catalyses the reaction Hydrolysis of terminal, non-reducing beta-D-glucosyl residues with release of beta-D-glucose.. In terms of biological role, glucosidase involved in the degradation of cellulosic biomass. Has both alpha- and beta-glucosidase activity. This Aspergillus fumigatus (strain CBS 144.89 / FGSC A1163 / CEA10) (Neosartorya fumigata) protein is Probable alpha/beta-glucosidase agdC (agdC).